The chain runs to 246 residues: Agamous-like MADS-box protein AGL5 (246 aa).

The MADS-box domain occupies 18–72 (RGKIEIKRIENTTNRQVTFCKRRNGLLKKAYELSVLCDAEVALVIFSTRGRLYEY). One can recognise a K-box domain in the interval 102–192 (TQYYQQEASK…RSKITERTGL (91 aa)).

In terms of assembly, interacts with AGL15 and AGL16.

It localises to the nucleus. Functionally, probable transcription factor. Interacts genetically with TT16/AGL32 in a partially antagonistic manner during flower development. Is essential for the coordination of cell divisions in ovule, seed coat development and endosperm formation. This is Agamous-like MADS-box protein AGL5 (AGL5) from Arabidopsis thaliana (Mouse-ear cress).